A 522-amino-acid polypeptide reads, in one-letter code: Calcium-dependent protein kinase 14 (522 aa).

Low complexity-rich tracts occupy residues 1–12 and 19–45; these read MGNCCPPGSSSE and SSGSSRPAGSAGAAASPATISPSAAPA. A disordered region spans residues 1–58; it reads MGNCCPPGSSSEPDPPPASSGSSRPAGSAGAAASPATISPSAAPAPAKPPAPIGPVLG. The N-myristoyl glycine moiety is linked to residue Gly2. The Protein kinase domain occupies 68-326; the sequence is YTVGKELGRG…AYDVLNHPWI (259 aa). ATP contacts are provided by residues 74–82 and Lys97; that span reads LGRGQFGVT. The active-site Proton acceptor is the Asp192. The segment at 332–362 is autoinhibitory domain; that stretch reads APDTPLDNAVLGRLKQFRAMNQFKKAALRVI. EF-hand domains lie at 369-404, 405-440, 441-476, and 480-511; these read EEIRGLKEMFKSMDSDNSGTITVDELRKGLAKKGTK, LTEAEVQQLMEAADADGNGTIDYEEFITATMHMNRM, DREEHLYTAFQYFDKDNSGYITIEELEQALREKGLM, and EIKDIISEVDADNDGRINYTEFVAMMRKGDPE. Ca(2+) contacts are provided by Asp382, Asp384, Ser386, Thr388, Glu393, Asp418, Asp420, Asn422, Thr424, Glu429, Asp454, Asp456, Ser458, Tyr460, Glu465, Asp489, Asp491, Asp493, Arg495, and Glu500.

This sequence belongs to the protein kinase superfamily. Ser/Thr protein kinase family. CDPK subfamily.

It localises to the membrane. It catalyses the reaction L-seryl-[protein] + ATP = O-phospho-L-seryl-[protein] + ADP + H(+). It carries out the reaction L-threonyl-[protein] + ATP = O-phospho-L-threonyl-[protein] + ADP + H(+). With respect to regulation, activated by calcium. Autophosphorylation may play an important role in the regulation of the kinase activity. In terms of biological role, may play a role in signal transduction pathways that involve calcium as a second messenger. This chain is Calcium-dependent protein kinase 14, found in Oryza sativa subsp. japonica (Rice).